We begin with the raw amino-acid sequence, 455 residues long: Major capsid protein (455 aa).

The protein belongs to the ascoviridae capsid protein family.

The protein resides in the virion. In terms of biological role, major protein of the capsid. This chain is Major capsid protein (MCP), found in Heliothis virescens ascovirus 3e (HvAV-3e).